Consider the following 89-residue polypeptide: Small ribosomal subunit protein uS15 (89 aa).

It belongs to the universal ribosomal protein uS15 family. In terms of assembly, part of the 30S ribosomal subunit. Forms a bridge to the 50S subunit in the 70S ribosome, contacting the 23S rRNA.

One of the primary rRNA binding proteins, it binds directly to 16S rRNA where it helps nucleate assembly of the platform of the 30S subunit by binding and bridging several RNA helices of the 16S rRNA. In terms of biological role, forms an intersubunit bridge (bridge B4) with the 23S rRNA of the 50S subunit in the ribosome. This chain is Small ribosomal subunit protein uS15, found in Maridesulfovibrio salexigens (strain ATCC 14822 / DSM 2638 / NCIMB 8403 / VKM B-1763) (Desulfovibrio salexigens).